Consider the following 213-residue polypeptide: Uracil phosphoribosyltransferase (213 aa).

Residues arginine 78, arginine 103, and 131-139 each bind 5-phospho-alpha-D-ribose 1-diphosphate; that span reads DPMLATGGT. Residues isoleucine 197 and 202-204 contribute to the uracil site; that span reads GDA. Aspartate 203 is a binding site for 5-phospho-alpha-D-ribose 1-diphosphate.

It belongs to the UPRTase family. The cofactor is Mg(2+).

The catalysed reaction is UMP + diphosphate = 5-phospho-alpha-D-ribose 1-diphosphate + uracil. It participates in pyrimidine metabolism; UMP biosynthesis via salvage pathway; UMP from uracil: step 1/1. Its activity is regulated as follows. Allosterically activated by GTP. Catalyzes the conversion of uracil and 5-phospho-alpha-D-ribose 1-diphosphate (PRPP) to UMP and diphosphate. The chain is Uracil phosphoribosyltransferase from Bifidobacterium animalis subsp. lactis (strain AD011).